The chain runs to 295 residues: UDP-3-O-acyl-N-acetylglucosamine deacetylase (295 aa).

The Zn(2+) site is built by histidine 77, histidine 233, and aspartate 237. Histidine 260 acts as the Proton donor in catalysis.

The protein belongs to the LpxC family. The cofactor is Zn(2+).

It catalyses the reaction a UDP-3-O-[(3R)-3-hydroxyacyl]-N-acetyl-alpha-D-glucosamine + H2O = a UDP-3-O-[(3R)-3-hydroxyacyl]-alpha-D-glucosamine + acetate. It participates in glycolipid biosynthesis; lipid IV(A) biosynthesis; lipid IV(A) from (3R)-3-hydroxytetradecanoyl-[acyl-carrier-protein] and UDP-N-acetyl-alpha-D-glucosamine: step 2/6. Catalyzes the hydrolysis of UDP-3-O-myristoyl-N-acetylglucosamine to form UDP-3-O-myristoylglucosamine and acetate, the committed step in lipid A biosynthesis. In Solibacter usitatus (strain Ellin6076), this protein is UDP-3-O-acyl-N-acetylglucosamine deacetylase.